The following is a 78-amino-acid chain: Small ribosomal subunit protein bS18 (78 aa).

It belongs to the bacterial ribosomal protein bS18 family. As to quaternary structure, part of the 30S ribosomal subunit. Forms a tight heterodimer with protein bS6.

Functionally, binds as a heterodimer with protein bS6 to the central domain of the 16S rRNA, where it helps stabilize the platform of the 30S subunit. The chain is Small ribosomal subunit protein bS18 from Pediococcus pentosaceus (strain ATCC 25745 / CCUG 21536 / LMG 10740 / 183-1w).